The primary structure comprises 414 residues: Relaxin-3 receptor 2 (414 aa).

Topologically, residues M1 to A43 are extracellular. N-linked (GlcNAc...) asparagine glycosylation is found at N5 and N17. A helical transmembrane segment spans residues L44–L64. Residues G65 to D77 lie on the Cytoplasmic side of the membrane. Residues T78–A98 traverse the membrane as a helical segment. Residues T99–V116 lie on the Extracellular side of the membrane. C114 and C191 are oxidised to a cystine. A helical membrane pass occupies residues V117–I137. Over A138–V155 the chain is Cytoplasmic. A helical membrane pass occupies residues F156–T176. Residues A177 to V209 are Extracellular-facing. A helical membrane pass occupies residues V210–F230. The Cytoplasmic segment spans residues L231 to L255. A helical transmembrane segment spans residues V256–V276. At R277 to Y293 the chain is on the extracellular side. Residues I294–L316 traverse the membrane as a helical segment. Residues R317 to V414 are Cytoplasmic-facing.

It belongs to the G-protein coupled receptor 1 family. Detected only in bone marrow.

The protein localises to the cell membrane. Functionally, high affinity receptor for INSL5. Also acts as a receptor for RLN3/relaxin-3, as well as bradykinin and kallidin. Binding of the ligand inhibit cAMP accumulation. The polypeptide is Relaxin-3 receptor 2 (Rxfp4) (Mus musculus (Mouse)).